The following is a 481-amino-acid chain: Glutamyl-tRNA(Gln) amidotransferase subunit A (481 aa).

Catalysis depends on charge relay system residues Lys-78 and Ser-153. The active-site Acyl-ester intermediate is Ser-177.

The protein belongs to the amidase family. GatA subfamily. As to quaternary structure, heterotrimer of A, B and C subunits.

The catalysed reaction is L-glutamyl-tRNA(Gln) + L-glutamine + ATP + H2O = L-glutaminyl-tRNA(Gln) + L-glutamate + ADP + phosphate + H(+). Its function is as follows. Allows the formation of correctly charged Gln-tRNA(Gln) through the transamidation of misacylated Glu-tRNA(Gln) in organisms which lack glutaminyl-tRNA synthetase. The reaction takes place in the presence of glutamine and ATP through an activated gamma-phospho-Glu-tRNA(Gln). The chain is Glutamyl-tRNA(Gln) amidotransferase subunit A from Borrelia garinii subsp. bavariensis (strain ATCC BAA-2496 / DSM 23469 / PBi) (Borreliella bavariensis).